The chain runs to 315 residues: Mannose-6-phosphate isomerase ManA (315 aa).

Zn(2+) is bound by residues histidine 97, glutamate 115, and histidine 172. Residue arginine 192 is part of the active site.

Belongs to the mannose-6-phosphate isomerase type 1 family. Zn(2+) serves as cofactor.

It catalyses the reaction D-mannose 6-phosphate = D-fructose 6-phosphate. This chain is Mannose-6-phosphate isomerase ManA (manA), found in Bacillus subtilis (strain 168).